The following is a 333-amino-acid chain: Cinnamoyl-CoA reductase 1 (333 aa).

NADP(+)-binding positions include 13 to 19 (GAGGFIA), Arg-38, Lys-44, 64 to 65 (DL), 84 to 86 (TAS), Tyr-157, Lys-161, 184 to 187 (PVLV), and Ser-199. Cys-150 and Cys-158 are oxidised to a cystine. The Proton donor role is filled by Lys-161.

The protein belongs to the NAD(P)-dependent epimerase/dehydratase family. Dihydroflavonol-4-reductase subfamily. Post-translationally, the formation of a reversible disulfide bond reduces activity by perturbing the positioning of nearby catalytic residues. In terms of tissue distribution, expressed in flowers, leaves and stems.

The protein localises to the cytoplasm. The enzyme catalyses (E)-coniferaldehyde + NADP(+) + CoA = (E)-feruloyl-CoA + NADPH + H(+). It catalyses the reaction (E)-4-coumaraldehyde + NADP(+) + CoA = (E)-4-coumaroyl-CoA + NADPH + H(+). The catalysed reaction is (E)-sinapaldehyde + NADP(+) + CoA = (E)-sinapoyl-CoA + NADPH + H(+). It carries out the reaction (E)-cinnamaldehyde + NADP(+) + CoA = (E)-cinnamoyl-CoA + NADPH + H(+). It functions in the pathway aromatic compound metabolism; phenylpropanoid biosynthesis. With respect to regulation, inhibited by sodium iodide-mediated oxidation. Functionally, involved in the latter stages of lignin biosynthesis. Catalyzes one of the last steps of monolignol biosynthesis, the conversion of cinnamoyl-CoAs into their corresponding cinnamaldehydes. Mediates the conversion of feruloyl CoA to coniferylaldehyde. Also active toward p-coumaroyl-CoA and sinapoyl-CoA. Involved in the production of floral volatile phenylpropanoids in flowers of fragrant cultivars (e.g. cv. Mitchell and cv. V26) from cinnamic acid, a common precursor with the anthocyanin biosynthesis pathway involved in flower pigmentation. In Petunia hybrida (Petunia), this protein is Cinnamoyl-CoA reductase 1.